Here is a 163-residue protein sequence, read N- to C-terminus: Phosphopantetheine adenylyltransferase (163 aa).

Substrate is bound at residue threonine 10. ATP contacts are provided by residues 10-11 and histidine 18; that span reads TF. Residues lysine 42, leucine 74, and arginine 88 each coordinate substrate. Residues 89–91, glutamate 99, and 124–130 each bind ATP; these read GLR and NSFISST.

It belongs to the bacterial CoaD family. In terms of assembly, homohexamer. The cofactor is Mg(2+).

The protein localises to the cytoplasm. The catalysed reaction is (R)-4'-phosphopantetheine + ATP + H(+) = 3'-dephospho-CoA + diphosphate. Its pathway is cofactor biosynthesis; coenzyme A biosynthesis; CoA from (R)-pantothenate: step 4/5. Reversibly transfers an adenylyl group from ATP to 4'-phosphopantetheine, yielding dephospho-CoA (dPCoA) and pyrophosphate. This chain is Phosphopantetheine adenylyltransferase, found in Shewanella baltica (strain OS195).